The primary structure comprises 163 residues: Probable chemoreceptor glutamine deamidase CheD (163 aa).

Belongs to the CheD family.

The catalysed reaction is L-glutaminyl-[protein] + H2O = L-glutamyl-[protein] + NH4(+). Probably deamidates glutamine residues to glutamate on methyl-accepting chemotaxis receptors (MCPs), playing an important role in chemotaxis. The chain is Probable chemoreceptor glutamine deamidase CheD from Borreliella burgdorferi (strain ATCC 35210 / DSM 4680 / CIP 102532 / B31) (Borrelia burgdorferi).